A 161-amino-acid polypeptide reads, in one-letter code: C-type lectin lectoxin-Lio3 (161 aa).

The signal sequence occupies residues 1-23; the sequence is MRRFIFMSLGLLVLAFSLSGIGA. Intrachain disulfides connect cysteine 27–cysteine 38, cysteine 55–cysteine 154, and cysteine 129–cysteine 146. A C-type lectin domain is found at 34–155; the sequence is HNISCYKLFT…CGLLHYFICQ (122 aa). Residue asparagine 35 is glycosylated (N-linked (GlcNAc...) asparagine). A Mannose-binding motif is present at residues 117–119; it reads KGE. Ca(2+) contacts are provided by glutamate 127, asparagine 142, and aspartate 143.

Belongs to the true venom lectin family. As to expression, expressed by the venom gland.

It is found in the secreted. Functionally, mannose-binding lectin which recognizes specific carbohydrate structures and agglutinates a variety of animal cells by binding to cell-surface glycoproteins and glycolipids. May be a calcium-dependent lectin. The chain is C-type lectin lectoxin-Lio3 from Erythrolamprus poecilogyrus (Water snake).